We begin with the raw amino-acid sequence, 42 residues long: MRDIKTYLSVAPVLSTLWFGALAGLLIEINRLFPDALSFPFF.

The chain crosses the membrane as a helical span at residues Y7–I27.

It belongs to the PsaJ family.

It is found in the plastid. It localises to the chloroplast thylakoid membrane. May help in the organization of the PsaE and PsaF subunits. This is Photosystem I reaction center subunit IX from Agrostis stolonifera (Creeping bentgrass).